The primary structure comprises 993 residues: Signal peptide, CUB and EGF-like domain-containing protein 3 (993 aa).

The N-terminal stretch at 1–20 (MGSGRVPGLCLLLLLVHARA) is a signal peptide. Residues 29–69 (DVDECVEGTDNCHIDAICQNTPRSYKCICKSGYTGDGKHCK) form the EGF-like 1; calcium-binding domain. 26 disulfides stabilise this stretch: cysteine 33–cysteine 46, cysteine 40–cysteine 55, cysteine 57–cysteine 68, cysteine 74–cysteine 86, cysteine 82–cysteine 95, cysteine 97–cysteine 110, cysteine 116–cysteine 127, cysteine 123–cysteine 136, cysteine 161–cysteine 172, cysteine 168–cysteine 182, cysteine 184–cysteine 197, cysteine 201–cysteine 212, cysteine 208–cysteine 221, cysteine 223–cysteine 236, cysteine 240–cysteine 251, cysteine 247–cysteine 260, cysteine 262–cysteine 275, cysteine 281–cysteine 292, cysteine 288–cysteine 301, cysteine 303–cysteine 316, cysteine 322–cysteine 332, cysteine 328–cysteine 341, cysteine 343–cysteine 355, cysteine 361–cysteine 372, cysteine 368–cysteine 381, and cysteine 383–cysteine 397. An EGF-like 2; calcium-binding domain is found at 70–111 (DVDECEREDNAGCVHDCVNIPGNYRCTCYDGFHLAHDGHNCL). Positions 112 to 148 (DVDECAEGNGGCQQSCVNMMGSYECHCRDGFFLSDNQ) constitute an EGF-like 3; calcium-binding domain. 3 consecutive EGF-like domains span residues 157-198 (EGMN…RDCK), 199-237 (LTCN…KTCI), and 238-276 (ETCA…KTCK). Positions 277 to 317 (DIDECRLNNGGCDHICRNTVGSFECSCKKGYKLLINERSCQ) constitute an EGF-like 7; calcium-binding domain. An EGF-like 8; calcium-binding domain is found at 318–356 (DIDECSFDRTCDHMCVNTPGSFQCLCHRGYLLYGVTHCG). The EGF-like 9; calcium-binding domain maps to 357 to 398 (DVDECSINKGGCRFGCINTPGSYQCTCPAGQGRLHWNGKDCT). N-linked (GlcNAc...) asparagine glycans are attached at residues asparagine 417, asparagine 464, asparagine 685, asparagine 756, and asparagine 785. 2 disulfide bridges follow: cysteine 804-cysteine 830 and cysteine 857-cysteine 878. The CUB domain occupies 804-916 (CGGELGEFTG…RGFQIPYVTY (113 aa)).

Forms homooligomers. Forms heterooligomers with SCUBE1 and SCUBE2. Interacts with TGFBR2 through the CUB domain; this interaction does not affect TGFB1-binding to TGFBR2. Interacts with BMP2, BMP4 and BMP7; the interaction is mediated by the CUB domain. Interacts with BMPR1A, BMPR1B and BMPR2; the interaction with BMPR1A and BMPR1B is BMP2- and BMP4-dependent. Post-translationally, N-glycosylated. In terms of processing, proteolytic cleavage produces a CUB-containing C-terminal fragment that retains the ability to bind to TGFBR2. This reaction is catalyzed in vitro by MMP2 and, to a lesser extent, by MMP9. Highly expressed in femur and humerus with little or no expression in non-bone tissues.

It localises to the secreted. Its subcellular location is the cell surface. Functionally, is a positive regulator of the BMP signaling pathway, required for proper chondrogenesis, osteogenesis and skeletal development. It acts as a coreceptor for BMP ligands, particularly BMP2 and BMP4, facilitating their interactions with BMP type I receptors. It is required for ligand-induced recruitment of BMP receptors to lipid rafts. Binds to TGFBR2 and activates TGFB signaling. The chain is Signal peptide, CUB and EGF-like domain-containing protein 3 from Mus musculus (Mouse).